The sequence spans 318 residues: MAESLLELKKKIASIQKTGQITEAMRMVSGVKLNRTEKLDQEYTIYNDKVRATVSHLMSSQIVKQLGKETKEYNEFGGSASIDYSNFFDLGTLASLVQPRKKIKSTGYLVISGDRGLVGSYNSQVIKNMMSIFKDADAQNKDVKILAVGSVAAQFFKKQNLNVVYEYSGVSDVPTYNEVRDIIQTAVKLYLNGVYDELFVCYTHHVNTLTSAFRVESMLPISDIDINHKDTMPKDYIIEPDIDSVLKTVLPQFSKSMIFGAILDAKTAEHASSMTAMQSASKNADDVVSGLKTKLNRARQAQITTEITEIIGGANALE.

The protein belongs to the ATPase gamma chain family. As to quaternary structure, F-type ATPases have 2 components, CF(1) - the catalytic core - and CF(0) - the membrane proton channel. CF(1) has five subunits: alpha(3), beta(3), gamma(1), delta(1), epsilon(1). CF(0) has three main subunits: a, b and c.

The protein localises to the cell membrane. Produces ATP from ADP in the presence of a proton gradient across the membrane. The gamma chain is believed to be important in regulating ATPase activity and the flow of protons through the CF(0) complex. In Lactobacillus gasseri (strain ATCC 33323 / DSM 20243 / BCRC 14619 / CIP 102991 / JCM 1131 / KCTC 3163 / NCIMB 11718 / NCTC 13722 / AM63), this protein is ATP synthase gamma chain.